The primary structure comprises 378 residues: Chaperone protein DnaJ (378 aa).

One can recognise a J domain in the interval Asp6–Gly70. The segment at Gly137–Lys219 adopts a CR-type zinc-finger fold. Cys150, Cys153, Cys167, Cys170, Cys193, Cys196, Cys207, and Cys210 together coordinate Zn(2+). CXXCXGXG motif repeat units lie at residues Cys150–Gly157, Cys167–Gly174, Cys193–Gly200, and Cys207–Gly214.

The protein belongs to the DnaJ family. Homodimer. It depends on Zn(2+) as a cofactor.

It localises to the cytoplasm. Its function is as follows. Participates actively in the response to hyperosmotic and heat shock by preventing the aggregation of stress-denatured proteins and by disaggregating proteins, also in an autonomous, DnaK-independent fashion. Unfolded proteins bind initially to DnaJ; upon interaction with the DnaJ-bound protein, DnaK hydrolyzes its bound ATP, resulting in the formation of a stable complex. GrpE releases ADP from DnaK; ATP binding to DnaK triggers the release of the substrate protein, thus completing the reaction cycle. Several rounds of ATP-dependent interactions between DnaJ, DnaK and GrpE are required for fully efficient folding. Also involved, together with DnaK and GrpE, in the DNA replication of plasmids through activation of initiation proteins. This chain is Chaperone protein DnaJ, found in Lactobacillus delbrueckii subsp. bulgaricus (strain ATCC 11842 / DSM 20081 / BCRC 10696 / JCM 1002 / NBRC 13953 / NCIMB 11778 / NCTC 12712 / WDCM 00102 / Lb 14).